We begin with the raw amino-acid sequence, 434 residues long: Enolase (434 aa).

Substrate is bound by residues His158 and Glu167. The Proton donor role is filled by Glu210. 3 residues coordinate Mg(2+): Asp245, Glu294, and Asp319. Substrate is bound by residues Glu294 and Asp319. Lys344 functions as the Proton acceptor in the catalytic mechanism. Residues 371–374 (SHRS) and Lys395 each bind substrate.

It belongs to the enolase family. In terms of assembly, homodimer. It depends on Mg(2+) as a cofactor.

The protein resides in the cytoplasm. It carries out the reaction (2R)-2-phosphoglycerate = phosphoenolpyruvate + H2O. It participates in carbohydrate degradation; glycolysis; pyruvate from D-glyceraldehyde 3-phosphate: step 4/5. This chain is Enolase (ENO), found in Schistosoma mansoni (Blood fluke).